The chain runs to 215 residues: Rac-like GTP-binding protein ARAC10 (215 aa).

GTP is bound at residue 15–22; it reads GDGAVGKT. The short motif at 37 to 45 is the Effector region element; the sequence is YIPTVFDNF. GTP is bound by residues 62 to 66 and 120 to 123; these read DTAGQ and TKLD. S-palmitoyl cysteine attachment occurs at residues Cys202 and Cys208.

It belongs to the small GTPase superfamily. Rho family. In terms of assembly, component of the active ARAC10-IRC5-KIN13A complex. Interacts with ICR5.

The protein localises to the membrane. It is found in the cytoplasm. It localises to the cytoskeleton. Functionally, involved in local disassembly of cortical microtubules when associated with ICR5 and KIN13A. The polypeptide is Rac-like GTP-binding protein ARAC10 (ARAC10) (Arabidopsis thaliana (Mouse-ear cress)).